The chain runs to 307 residues: Aspartate carbamoyltransferase catalytic subunit (307 aa).

R54 and T55 together coordinate carbamoyl phosphate. Position 83 (K83) interacts with L-aspartate. Residues R104, H132, and Q135 each coordinate carbamoyl phosphate. 2 residues coordinate L-aspartate: R165 and R228. Carbamoyl phosphate is bound by residues L267 and P268.

It belongs to the aspartate/ornithine carbamoyltransferase superfamily. ATCase family. In terms of assembly, heterododecamer (2C3:3R2) of six catalytic PyrB chains organized as two trimers (C3), and six regulatory PyrI chains organized as three dimers (R2).

The catalysed reaction is carbamoyl phosphate + L-aspartate = N-carbamoyl-L-aspartate + phosphate + H(+). It participates in pyrimidine metabolism; UMP biosynthesis via de novo pathway; (S)-dihydroorotate from bicarbonate: step 2/3. Catalyzes the condensation of carbamoyl phosphate and aspartate to form carbamoyl aspartate and inorganic phosphate, the committed step in the de novo pyrimidine nucleotide biosynthesis pathway. This chain is Aspartate carbamoyltransferase catalytic subunit, found in Clostridium perfringens (strain ATCC 13124 / DSM 756 / JCM 1290 / NCIMB 6125 / NCTC 8237 / Type A).